Consider the following 259-residue polypeptide: Glutamate racemase (259 aa).

Substrate contacts are provided by residues 9-10 (DS) and 41-42 (YG). Catalysis depends on Cys-73, which acts as the Proton donor/acceptor. Position 74 to 75 (74 to 75 (NT)) interacts with substrate. Cys-183 serves as the catalytic Proton donor/acceptor. 184 to 185 (TH) contributes to the substrate binding site.

The protein belongs to the aspartate/glutamate racemases family.

The enzyme catalyses L-glutamate = D-glutamate. Its pathway is cell wall biogenesis; peptidoglycan biosynthesis. Its function is as follows. Provides the (R)-glutamate required for cell wall biosynthesis. This Shewanella frigidimarina (strain NCIMB 400) protein is Glutamate racemase.